A 274-amino-acid polypeptide reads, in one-letter code: Large ribosomal subunit protein uL2 (274 aa).

A disordered region spans residues 223–258 (VAMNPVDHPHGGGEGRTSGGRHPVTPWGIPTKGYKT).

This sequence belongs to the universal ribosomal protein uL2 family. In terms of assembly, part of the 50S ribosomal subunit. Forms a bridge to the 30S subunit in the 70S ribosome.

Functionally, one of the primary rRNA binding proteins. Required for association of the 30S and 50S subunits to form the 70S ribosome, for tRNA binding and peptide bond formation. It has been suggested to have peptidyltransferase activity; this is somewhat controversial. Makes several contacts with the 16S rRNA in the 70S ribosome. The chain is Large ribosomal subunit protein uL2 from Geotalea daltonii (strain DSM 22248 / JCM 15807 / FRC-32) (Geobacter daltonii).